We begin with the raw amino-acid sequence, 530 residues long: MNNARPIHRALLSVSDKTGIVEFAKALAERGVELLSTGGTARLLAEQGLTVTEVSDYTGFPEMMDGRVKTLHPKVHGGILGRRGQDDAVMNTHGIQPIDMVVVNLYPFAQTVANPNCTLADAVENIDIGGPTMVRSAAKNHKDVAIVVNAHDYDRVIREMDANHNSLTLATRFDLAIAAFEHTAAYDGMIANYFGTLVPSYGDNKEGDEESKFPRTFNAQFIKKQDMRYGENSHQAAAFYVEANPQEASVATARQIQGKALSYNNIADTDAALECVKEFSEPACVIVKHANPCGVALGDDLLQAYNRAYQTDPTSAFGGIIAFNRELDGETARAIIERQFVEVIIAPKVSQAAIDIVAAKQNVRLLECGEWQGQTTGFDLKRVNGGLLVQDRDQGMVAQDDLQVVSTRQPSDAELKDALFCWKVAKYVKSNAIVYAKGDMTIGIGAGQMSRVYSAKIAGIKAADEGLEVAGSVMASDAFFPFRDGIDAAAEAGITCVIQPGGSMRDQEVIDAANEHGMAMIFTGMRHFRH.

The 148-residue stretch at 1–148 folds into the MGS-like domain; that stretch reads MNNARPIHRA…KNHKDVAIVV (148 aa).

This sequence belongs to the PurH family.

The enzyme catalyses (6R)-10-formyltetrahydrofolate + 5-amino-1-(5-phospho-beta-D-ribosyl)imidazole-4-carboxamide = 5-formamido-1-(5-phospho-D-ribosyl)imidazole-4-carboxamide + (6S)-5,6,7,8-tetrahydrofolate. The catalysed reaction is IMP + H2O = 5-formamido-1-(5-phospho-D-ribosyl)imidazole-4-carboxamide. The protein operates within purine metabolism; IMP biosynthesis via de novo pathway; 5-formamido-1-(5-phospho-D-ribosyl)imidazole-4-carboxamide from 5-amino-1-(5-phospho-D-ribosyl)imidazole-4-carboxamide (10-formyl THF route): step 1/1. Its pathway is purine metabolism; IMP biosynthesis via de novo pathway; IMP from 5-formamido-1-(5-phospho-D-ribosyl)imidazole-4-carboxamide: step 1/1. The polypeptide is Bifunctional purine biosynthesis protein PurH (Vibrio cholerae serotype O1 (strain M66-2)).